We begin with the raw amino-acid sequence, 131 residues long: Phosphoribosyl-AMP cyclohydrolase (131 aa).

Mg(2+) is bound at residue aspartate 89. Cysteine 90 lines the Zn(2+) pocket. Aspartate 91 and aspartate 93 together coordinate Mg(2+). Cysteine 106 and cysteine 113 together coordinate Zn(2+).

The protein belongs to the PRA-CH family. In terms of assembly, homodimer. Requires Mg(2+) as cofactor. Zn(2+) is required as a cofactor.

It localises to the cytoplasm. It catalyses the reaction 1-(5-phospho-beta-D-ribosyl)-5'-AMP + H2O = 1-(5-phospho-beta-D-ribosyl)-5-[(5-phospho-beta-D-ribosylamino)methylideneamino]imidazole-4-carboxamide. It functions in the pathway amino-acid biosynthesis; L-histidine biosynthesis; L-histidine from 5-phospho-alpha-D-ribose 1-diphosphate: step 3/9. Catalyzes the hydrolysis of the adenine ring of phosphoribosyl-AMP. This is Phosphoribosyl-AMP cyclohydrolase from Bifidobacterium longum (strain DJO10A).